Consider the following 677-residue polypeptide: MSAAKNEMYYSLLEWFKTLNLNAPHADAESLADGVAVAQALNQFAPESFTDSWLAKIKASAVGINWRLRMSNLKKVTQSLYDYYSEVLNYTLSDFVKPDVQRIAEKCDLVELERLLQLVLGCAVNCAKKQSYITEIMCLEEELQANIMRALQELESSRNAAEGGIVTSLSRSSISGMLDGKVLQEERDAMAQKCFETEKKMLLLIDEKTNLQQELQRVQKEFARLEHSSTVIGDDGVSLGPVQTGSVRYNELRRQLDLLKEELLQSEGAREDLKLKAQQQETDLLHMQMRIDELLKSTAEVTTLKDEVDVLRESNDKLKICEGQLDTYKKKLEDYNDLKKQVKILEERSADYVQQNAQFEEDAKRYANTKGQIELFKKEIQDLHTKLDSESSKNVKLEFDNKNLEGKNLALQRAKDSLLKERDNLRETVDELKCGHLSSNSGLTGTAVSRELQPPATVEKMQRLEAENKALREGQGGQTALAQLLDDANKRCENLREQLKSANERILSLSHASQSDDPILKESEFGKQIKQLMELNEQKTLQLEESVTQSSSLQCKVTQLETNLTAREQEVMAYDAKYRKCLEKAKEVIKSFDPRIASAIDASALEKYFDVVEEEPKPKMSVMEEQLMTSAFYRLGVNAQRDAVDSKLAILMGSGQTFLARQRQSAPRKSLSAMKSK.

In terms of domain architecture, Calponin-homology (CH) spans 6-123 (NEMYYSLLEW…RLLQLVLGCA (118 aa)). Coiled coils occupy residues 135 to 436 (EIMC…KCGH) and 478 to 588 (QTAL…AKEV).

The protein belongs to the hook family. In terms of assembly, homodimer. Interacts with microtubules via its N-terminus.

Its subcellular location is the cytoplasm. It is found in the cytoskeleton. The protein localises to the endosome. It localises to the synapse. Functionally, involved in endocytic trafficking by stabilizing organelles of the endocytic pathway. Probably acts as a cytoskeletal linker protein required to tether endosome vesicles to the cytoskeleton. Involved in modulation of endocytosis at stages required for down-regulation of membrane proteins that control synapse size. Not involved in synaptic vesicle recycling. Required in R7 cells for boss endocytosis into multivesicular bodies (MVBs). Has a role in regulating adult longevity. The chain is Protein hook from Drosophila pseudoobscura pseudoobscura (Fruit fly).